Reading from the N-terminus, the 251-residue chain is Large ribosomal subunit protein uL3 (251 aa).

Gln151 carries the N5-methylglutamine modification. Residues 219 to 251 (PGAFRRNGEEAAAAPAAEAPAETPAEEAGQEGA) form a disordered region. Residues 228 to 241 (EAAAAPAAEAPAET) are compositionally biased toward low complexity. Residues 242 to 251 (PAEEAGQEGA) are compositionally biased toward acidic residues.

It belongs to the universal ribosomal protein uL3 family. As to quaternary structure, part of the 50S ribosomal subunit. Forms a cluster with proteins L14 and L19. Post-translationally, methylated by PrmB.

In terms of biological role, one of the primary rRNA binding proteins, it binds directly near the 3'-end of the 23S rRNA, where it nucleates assembly of the 50S subunit. The polypeptide is Large ribosomal subunit protein uL3 (Parvibaculum lavamentivorans (strain DS-1 / DSM 13023 / NCIMB 13966)).